A 763-amino-acid polypeptide reads, in one-letter code: Protein translocase subunit SecA 2 (763 aa).

ATP is bound by residues Q83, 101–105 (GEGKT), and D490.

This sequence belongs to the SecA family. Monomer and homodimer. Part of the essential Sec protein translocation apparatus which comprises SecA, SecYEG and auxiliary proteins SecDF. Other proteins may also be involved.

Its subcellular location is the cell membrane. The protein localises to the cytoplasm. It carries out the reaction ATP + H2O + cellular proteinSide 1 = ADP + phosphate + cellular proteinSide 2.. Its function is as follows. Part of the Sec protein translocase complex. Interacts with the SecYEG preprotein conducting channel. Has a central role in coupling the hydrolysis of ATP to the transfer of proteins into and across the cell membrane, serving as an ATP-driven molecular motor driving the stepwise translocation of polypeptide chains across the membrane. This Corynebacterium glutamicum (strain ATCC 13032 / DSM 20300 / JCM 1318 / BCRC 11384 / CCUG 27702 / LMG 3730 / NBRC 12168 / NCIMB 10025 / NRRL B-2784 / 534) protein is Protein translocase subunit SecA 2.